The sequence spans 397 residues: LIM/homeobox protein Lhx9 (397 aa).

LIM zinc-binding domains lie at 69–130 (ALCA…RFSV) and 131–193 (QRCA…LLQG). 2 disordered regions span residues 248–272 (ENEA…RMRT) and 330–364 (ENGG…TLTD). The homeobox DNA-binding region spans 267–326 (TKRMRTSFKHHQLRTMKSYFAINHNPDAKDLKQLAQKTGLTKRVLQVWFQNARAKFRRNL).

As to quaternary structure, interacts with LDB1 and LDB2.

It is found in the nucleus. Its function is as follows. Involved in gonadal development. This Bos taurus (Bovine) protein is LIM/homeobox protein Lhx9 (LHX9).